We begin with the raw amino-acid sequence, 334 residues long: MAVDPAFLHALPKVELHLHIEGSLEPEMMVALAERNGLRLPYASVEAVRAAYDFQNLQDFLDLYYQGMAVLRTERDFEDLAMAYFQRAAAQNVLHAEIFFDPQGHTARGVALEAVIAGLTSARKRAEAELGVSSELILSFLRHLSEEEAFATLEEALPHRDQFIGVGLDSSEVGHPPAKFARVFARARAEGLRLVAHAGEEGPPDYVREALDLLAIDRLDHGNRALEDEALIERLIAEGMALTVCPLSNLKLRVVDDLGAHPLKAMLERGLKATINSDDPSYFGGYMLENMAAVAEALALETHHLRTLTANAIDASFASPARKAEMHARLAAVN.

Residues His17, His19, and His197 each contribute to the Zn(2+) site. Glu200 functions as the Proton donor in the catalytic mechanism. A Zn(2+)-binding site is contributed by Asp278. Position 279 (Asp279) interacts with substrate.

Belongs to the metallo-dependent hydrolases superfamily. Adenosine and AMP deaminases family. Adenine deaminase type 2 subfamily. Zn(2+) is required as a cofactor.

It catalyses the reaction adenine + H2O + H(+) = hypoxanthine + NH4(+). Its function is as follows. Catalyzes the hydrolytic deamination of adenine to hypoxanthine. Plays an important role in the purine salvage pathway and in nitrogen catabolism. The polypeptide is Adenine deaminase (Rhodospirillum rubrum (strain ATCC 11170 / ATH 1.1.1 / DSM 467 / LMG 4362 / NCIMB 8255 / S1)).